A 229-amino-acid polypeptide reads, in one-letter code: Potassium/proton antiporter CemA (229 aa).

3 helical membrane-spanning segments follow: residues 7–27 (LNPLPYLASIVFLPWGISLSF), 106–126 (IILHFSTNITCFAILSAYSIL), and 189–209 (IISGLVSTFPVILDTILKYWI).

This sequence belongs to the CemA family.

It localises to the plastid. The protein resides in the chloroplast inner membrane. The enzyme catalyses K(+)(in) + H(+)(out) = K(+)(out) + H(+)(in). Its function is as follows. Contributes to K(+)/H(+) antiport activity by supporting proton efflux to control proton extrusion and homeostasis in chloroplasts in a light-dependent manner to modulate photosynthesis. Prevents excessive induction of non-photochemical quenching (NPQ) under continuous-light conditions. Indirectly promotes efficient inorganic carbon uptake into chloroplasts. This Nymphaea alba (White water-lily) protein is Potassium/proton antiporter CemA.